The chain runs to 364 residues: Dihydroorotate dehydrogenase (quinone) (364 aa).

Residues 62–66 (AGFDK) and Thr86 each bind FMN. A substrate-binding site is contributed by Lys66. Position 111–115 (111–115 (NRMGF)) interacts with substrate. FMN-binding residues include Asn142 and Asn175. Asn175 provides a ligand contact to substrate. Catalysis depends on Ser178, which acts as the Nucleophile. Substrate is bound at residue Asn180. FMN-binding residues include Lys216 and Thr244. 245–246 (NT) lines the substrate pocket. Residues Gly267, Gly296, and 317 to 318 (YT) contribute to the FMN site.

The protein belongs to the dihydroorotate dehydrogenase family. Type 2 subfamily. As to quaternary structure, monomer. FMN is required as a cofactor.

The protein resides in the cell membrane. The enzyme catalyses (S)-dihydroorotate + a quinone = orotate + a quinol. Its pathway is pyrimidine metabolism; UMP biosynthesis via de novo pathway; orotate from (S)-dihydroorotate (quinone route): step 1/1. Its function is as follows. Catalyzes the conversion of dihydroorotate to orotate with quinone as electron acceptor. In Anaeromyxobacter sp. (strain K), this protein is Dihydroorotate dehydrogenase (quinone).